We begin with the raw amino-acid sequence, 386 residues long: Protein lin-8 (386 aa).

Residues Leu-175–Ser-285 are sufficient for interaction with lin-35. The disordered stretch occupies residues Glu-212–Lys-240. The span at Pro-229 to Lys-240 shows a compositional bias: low complexity.

This sequence belongs to the lin-8 family. Interacts with lin-35 (via C-terminus). As to expression, widely expressed throughout development, with particularly prominent expression in the germline and in neuronal nuclei of the head (at protein level).

The protein localises to the nucleus. Functionally, acts as a synthetic multivulva class A (synMuvA) protein and redundantly inhibits lin-3/EGF expression to prevent inappropriate vulva induction. This Caenorhabditis elegans protein is Protein lin-8.